The chain runs to 554 residues: Hedycaryol synthase (554 aa).

(2E,6E)-farnesyl diphosphate-binding residues include R270, D307, D311, R449, and D452. Mg(2+) contacts are provided by D307 and D311. Positions D307–D311 match the DDXXD motif motif. Mg(2+) is bound by residues D452, S456, and E460.

The protein belongs to the terpene synthase family. Mg(2+) serves as cofactor. As to expression, specifically expressed in flowers.

It carries out the reaction (2E,6E)-farnesyl diphosphate + H2O = (2E,6E)-hedycaryol + diphosphate. The protein operates within secondary metabolite biosynthesis; terpenoid biosynthesis. Sesquiterpene synthase that catalyzes the formation of sesquiterpenes and sesquiterpenoid alcohols. Converts farnesyl diphosphate (FPP) to hedycaryol. Hedycaryol is likely to be one of the terpenes that attract insects for pollination of Camellia brevistyla. This chain is Hedycaryol synthase, found in Camellia brevistyla.